Consider the following 292-residue polypeptide: Lipoyl synthase (292 aa).

Positions 38, 43, 49, 64, 68, 71, and 277 each coordinate [4Fe-4S] cluster. Positions 50–266 (WSKGTATFLL…REIALDAGFR (217 aa)) constitute a Radical SAM core domain.

This sequence belongs to the radical SAM superfamily. Lipoyl synthase family. [4Fe-4S] cluster serves as cofactor.

Its subcellular location is the cytoplasm. The enzyme catalyses [[Fe-S] cluster scaffold protein carrying a second [4Fe-4S](2+) cluster] + N(6)-octanoyl-L-lysyl-[protein] + 2 oxidized [2Fe-2S]-[ferredoxin] + 2 S-adenosyl-L-methionine + 4 H(+) = [[Fe-S] cluster scaffold protein] + N(6)-[(R)-dihydrolipoyl]-L-lysyl-[protein] + 4 Fe(3+) + 2 hydrogen sulfide + 2 5'-deoxyadenosine + 2 L-methionine + 2 reduced [2Fe-2S]-[ferredoxin]. The protein operates within protein modification; protein lipoylation via endogenous pathway; protein N(6)-(lipoyl)lysine from octanoyl-[acyl-carrier-protein]: step 2/2. Catalyzes the radical-mediated insertion of two sulfur atoms into the C-6 and C-8 positions of the octanoyl moiety bound to the lipoyl domains of lipoate-dependent enzymes, thereby converting the octanoylated domains into lipoylated derivatives. The protein is Lipoyl synthase of Chlorobaculum parvum (strain DSM 263 / NCIMB 8327) (Chlorobium vibrioforme subsp. thiosulfatophilum).